Consider the following 549-residue polypeptide: Probable protein kinase UbiB (549 aa).

In terms of domain architecture, Protein kinase spans 123-501 (DFDETPLASA…QQQAHKSNYM (379 aa)). Residues 129–137 (LASASISQV) and K152 each bind ATP. D287 (proton acceptor) is an active-site residue. The next 2 helical transmembrane spans lie at 499–516 (NYMLITSAVLLICGTLLF) and 521–540 (TLWSPYVCLTSGVLMWFIGW).

The protein belongs to the ABC1 family. UbiB subfamily.

It localises to the cell inner membrane. It participates in cofactor biosynthesis; ubiquinone biosynthesis [regulation]. Functionally, is probably a protein kinase regulator of UbiI activity which is involved in aerobic coenzyme Q (ubiquinone) biosynthesis. The protein is Probable protein kinase UbiB of Shewanella sp. (strain W3-18-1).